A 321-amino-acid chain; its full sequence is Phospho-N-acetylmuramoyl-pentapeptide-transferase (321 aa).

Transmembrane regions (helical) follow at residues 1–21, 50–70, 76–96, 112–132, 140–160, 176–196, 200–220, 225–245, 250–270, and 300–320; these read MIFI…PILI, MGGL…IIFV, IILL…DDYI, FLAQ…FHLV, IPFV…IVFW, GLAT…SYML, AIGI…PYNL, VFMG…ISIM, LSLI…MLQV, and VVTV…WIGV.

This sequence belongs to the glycosyltransferase 4 family. MraY subfamily. It depends on Mg(2+) as a cofactor.

It localises to the cell membrane. The catalysed reaction is UDP-N-acetyl-alpha-D-muramoyl-L-alanyl-gamma-D-glutamyl-L-lysyl-D-alanyl-D-alanine + di-trans,octa-cis-undecaprenyl phosphate = Mur2Ac(oyl-L-Ala-gamma-D-Glu-L-Lys-D-Ala-D-Ala)-di-trans,octa-cis-undecaprenyl diphosphate + UMP. It functions in the pathway cell wall biogenesis; peptidoglycan biosynthesis. Functionally, catalyzes the initial step of the lipid cycle reactions in the biosynthesis of the cell wall peptidoglycan: transfers peptidoglycan precursor phospho-MurNAc-pentapeptide from UDP-MurNAc-pentapeptide onto the lipid carrier undecaprenyl phosphate, yielding undecaprenyl-pyrophosphoryl-MurNAc-pentapeptide, known as lipid I. The sequence is that of Phospho-N-acetylmuramoyl-pentapeptide-transferase from Staphylococcus epidermidis (strain ATCC 12228 / FDA PCI 1200).